Consider the following 395-residue polypeptide: HCLS1-binding protein 3 (395 aa).

Residue Met-1 is modified to N-acetylmethionine. Ser-3 bears the Phosphoserine mark. The PX domain occupies 19-142 (GLDLSVPQHQ…EFLGTRAPGA (124 aa)). Disordered stretches follow at residues 143–310 (TGLA…KELF) and 322–374 (LGSE…AMDE). The segment covering 162–174 (DSDEAFDFFEQQD) has biased composition (acidic residues). Position 191 is a phosphoserine (Ser-191). Over residues 194–206 (GEEEEEEEEEEVL) the composition is skewed to acidic residues. 2 stretches are compositionally biased toward basic and acidic residues: residues 249-260 (SDKKVSETRRPL) and 299-310 (RPEHGDASKELF). Phosphoserine is present on Ser-254. The span at 329–339 (KPQTKPKPLVP) shows a compositional bias: pro residues. Lys-341 carries the post-translational modification N6-acetyllysine.

Binds HCLS1. Interacts with the SH3 domain of HCLS1 in vitro. Ubiquitously expressed.

In terms of biological role, may be a modulator of IL-2 signaling. The sequence is that of HCLS1-binding protein 3 (Hs1bp3) from Mus musculus (Mouse).